The sequence spans 327 residues: MSESKLDVTLWPSVNQLTNPLVKHLVDNAKALRLLVEKLPSGATIIDAGIKAEGGLEAGRLIAEICMGGLGHVNLHSSSTFPHWPWTLSVHSNNPVLSCLGSQYAGWSLSHEKFFSLGSGPGRALAGREELYKELGYKDSADAAVLVLESDKVPPQEVIEKVARDTGVNPENLTFILTPTRSLAGTVQIVARVLEVALHKIHTLHFPLEHVVDGAASAPLPPPAPDFLIGMGRTNDAILFGGHAHIFVKGSDEAAAKLAKELPSSASRDYGRPFAEVFKAVNMDFYKIDPMLFSPAAVTVTAVESGKSFIGGKLDATLLDQSFGYSA.

It belongs to the MCH family.

The protein localises to the cytoplasm. The catalysed reaction is 5,10-methenyl-5,6,7,8-tetrahydromethanopterin + H2O = N(5)-formyl-5,6,7,8-tetrahydromethanopterin + H(+). Its pathway is one-carbon metabolism; formaldehyde degradation; formate from formaldehyde (H(4)MPT route): step 3/5. In terms of biological role, catalyzes the hydrolysis of methenyl-H(4)MPT(+) to 5-formyl-H(4)MPT. The polypeptide is Methenyltetrahydromethanopterin cyclohydrolase (mch) (Methylobacillus flagellatus (strain ATCC 51484 / DSM 6875 / VKM B-1610 / KT)).